The following is a 132-amino-acid chain: Interferon-induced transmembrane protein 5 (132 aa).

Positions 1–11 (MDTAYPREDTR) are enriched in basic and acidic residues. The disordered stretch occupies residues 1–21 (MDTAYPREDTRAPTPSKAGAH). Residues 1-36 (MDTAYPREDTRAPTPSKAGAHTALTLGAPHPPPRDH) are Extracellular-facing. The chain crosses the membrane as a helical span at residues 37 to 57 (LIWSVFSTLYLNLCCLGFLAL). S-palmitoyl cysteine attachment occurs at residues Cys-50, Cys-51, and Cys-84. Topologically, residues 58-86 (AYSIKARDQKVVGDLEAARRFGSKAKCYN) are cytoplasmic. A helical transmembrane segment spans residues 87 to 107 (ILAAMWTLVPPLLLLGLVVTG). The Extracellular segment spans residues 108–132 (ALHLARLAKDSAAFFSTKFDDADYD).

It belongs to the CD225/Dispanin family. In terms of assembly, interacts with FKBP11. Palmitoylated. Detected in osteoblasts and fibroblasts (at protein level). Detected in bone.

It localises to the cell membrane. In terms of biological role, required for normal bone mineralization. In Homo sapiens (Human), this protein is Interferon-induced transmembrane protein 5 (IFITM5).